The primary structure comprises 317 residues: tRNA uridine(34) hydroxylase (317 aa).

The 95-residue stretch at 123–217 (EDDDTIVIDA…YGKDPETKGE (95 aa)) folds into the Rhodanese domain. Residue Cys177 is the Cysteine persulfide intermediate of the active site.

This sequence belongs to the TrhO family.

The catalysed reaction is uridine(34) in tRNA + AH2 + O2 = 5-hydroxyuridine(34) in tRNA + A + H2O. Catalyzes oxygen-dependent 5-hydroxyuridine (ho5U) modification at position 34 in tRNAs. In Staphylococcus carnosus (strain TM300), this protein is tRNA uridine(34) hydroxylase.